Consider the following 651-residue polypeptide: Acetyl-coenzyme A synthetase (651 aa).

Residues 190-193, threonine 309, and asparagine 333 each bind CoA; that span reads RGGR. Residues 385–387, 409–414, aspartate 498, and arginine 513 contribute to the ATP site; these read GEP and DTWWQT. Serine 521 provides a ligand contact to CoA. Arginine 524 is an ATP binding site. Residues valine 535, histidine 537, and valine 540 each coordinate Mg(2+). Arginine 582 is a binding site for CoA. Lysine 607 carries the post-translational modification N6-acetyllysine.

Belongs to the ATP-dependent AMP-binding enzyme family. Mg(2+) serves as cofactor. Acetylated. Deacetylation by the SIR2-homolog deacetylase activates the enzyme.

The catalysed reaction is acetate + ATP + CoA = acetyl-CoA + AMP + diphosphate. Catalyzes the conversion of acetate into acetyl-CoA (AcCoA), an essential intermediate at the junction of anabolic and catabolic pathways. AcsA undergoes a two-step reaction. In the first half reaction, AcsA combines acetate with ATP to form acetyl-adenylate (AcAMP) intermediate. In the second half reaction, it can then transfer the acetyl group from AcAMP to the sulfhydryl group of CoA, forming the product AcCoA. The sequence is that of Acetyl-coenzyme A synthetase from Xanthobacter autotrophicus (strain ATCC BAA-1158 / Py2).